The sequence spans 81 residues: Photosystem I iron-sulfur center (81 aa).

4Fe-4S ferredoxin-type domains lie at 2–31 and 39–68; these read SHSV…MIPW and IASA…VRVY. Residues C11, C14, C17, C21, C48, C51, C54, and C58 each contribute to the [4Fe-4S] cluster site.

The eukaryotic PSI reaction center is composed of at least 11 subunits. [4Fe-4S] cluster is required as a cofactor.

Its subcellular location is the plastid. It localises to the chloroplast thylakoid membrane. The enzyme catalyses reduced [plastocyanin] + hnu + oxidized [2Fe-2S]-[ferredoxin] = oxidized [plastocyanin] + reduced [2Fe-2S]-[ferredoxin]. In terms of biological role, apoprotein for the two 4Fe-4S centers FA and FB of photosystem I (PSI); essential for photochemical activity. FB is the terminal electron acceptor of PSI, donating electrons to ferredoxin. The C-terminus interacts with PsaA/B/D and helps assemble the protein into the PSI complex. Required for binding of PsaD and PsaE to PSI. PSI is a plastocyanin-ferredoxin oxidoreductase, converting photonic excitation into a charge separation, which transfers an electron from the donor P700 chlorophyll pair to the spectroscopically characterized acceptors A0, A1, FX, FA and FB in turn. The protein is Photosystem I iron-sulfur center of Vitis vinifera (Grape).